Reading from the N-terminus, the 274-residue chain is Large ribosomal subunit protein uL2cz/uL2cy (274 aa).

The disordered stretch occupies residues N224–K274.

The protein belongs to the universal ribosomal protein uL2 family. In terms of assembly, part of the 50S ribosomal subunit.

It is found in the plastid. It localises to the chloroplast. In Panax ginseng (Korean ginseng), this protein is Large ribosomal subunit protein uL2cz/uL2cy (rpl2-A).